The chain runs to 204 residues: LexA repressor (204 aa).

Residues Ile30–Lys50 constitute a DNA-binding region (H-T-H motif). Active-site for autocatalytic cleavage activity residues include Ser125 and Lys162.

It belongs to the peptidase S24 family. Homodimer.

The catalysed reaction is Hydrolysis of Ala-|-Gly bond in repressor LexA.. Functionally, represses a number of genes involved in the response to DNA damage (SOS response), including recA and lexA. In the presence of single-stranded DNA, RecA interacts with LexA causing an autocatalytic cleavage which disrupts the DNA-binding part of LexA, leading to derepression of the SOS regulon and eventually DNA repair. The chain is LexA repressor from Carboxydothermus hydrogenoformans (strain ATCC BAA-161 / DSM 6008 / Z-2901).